The chain runs to 778 residues: Gelsolin (778 aa).

A signal peptide spans 1–23 (MGKQGFGYIFLTIFCTMALKLNC). Residues 49–172 (MVEHAEFSKA…YKAGGVASGF (124 aa)) are actin-severing. One copy of the Gelsolin-like 1 repeat lies at 72–154 (FDLVPVPKNL…VQGHESSTFL (83 aa)). Ca(2+)-binding residues include Gly-88, Asp-89, Glu-120, Asp-132, Gly-137, and Ala-139. The segment at 119–122 (DERG) is actin-actin interfilament contact point. 158-165 (KSGIKYKA) provides a ligand contact to a 1,2-diacyl-sn-glycero-3-phospho-(1D-myo-inositol-4,5-bisphosphate). Val-168 is a binding site for Ca(2+). 184-192 (RLLQVKGRR) is a binding site for a 1,2-diacyl-sn-glycero-3-phospho-(1D-myo-inositol-4,5-bisphosphate). The stretch at 193–266 (TVRATEVPVS…SEEGAEREEM (74 aa)) is one Gelsolin-like 2 repeat. The Ca(2+) site is built by Gly-209 and Asp-210. Cysteines 211 and 224 form a disulfide. Ca(2+) is bound by residues Glu-232, Asp-282, Glu-325, Asp-326, Glu-350, Gly-467, Asp-468, Glu-498, Asp-510, Gly-515, Pro-517, Thr-547, Asn-587, Asp-588, Glu-610, Asp-692, Asp-693, and Glu-715. Gelsolin-like repeat units lie at residues 313-385 (DENP…TPLF) and 451-532 (SEKV…PHLM). The interval 430–778 (AAQHGMEDDG…LQRAMADVDV (349 aa)) is actin-binding, Ca-sensitive. Gelsolin-like repeat units lie at residues 574–638 (AVEL…DNFW) and 677–752 (IEEV…PPTF).

The protein belongs to the villin/gelsolin family. Binds to actin and to fibronectin. As to expression, highly expressed in homogene cells of the basilar papilla. Also detected in subcutaneous layer of the skin.

The protein resides in the secreted. It localises to the cytoplasm. The protein localises to the cytoskeleton. In terms of biological role, calcium-regulated, actin-modulating protein that binds to the plus (or barbed) ends of actin monomers or filaments, preventing monomer exchange (end-blocking or capping). It can promote the assembly of monomers into filaments (nucleation) as well as sever filaments already formed. Plays a role in ciliogenesis. In Gallus gallus (Chicken), this protein is Gelsolin (GSN).